Here is a 654-residue protein sequence, read N- to C-terminus: NADPH-dependent diflavin oxidoreductase 1 (654 aa).

A compositionally biased stretch (low complexity) spans 1-10 (MSGSQSSGSP). Residues 1–22 (MSGSQSSGSPGSPGPPGPPGRS) are disordered. The Flavodoxin-like domain occupies 23–167 (ALVVYGSETG…TFIPWLAGFR (145 aa)). FMN is bound by residues 29–34 (SETGNA), 76–79 (STTG), and 114–123 (LGDSSYPKFN). One can recognise an FAD-binding FR-type domain in the interval 235-485 (HDSLTATLVQ…QLQRGGLNSS (251 aa)). Residues Arg389, 419–422 (RQFS), and 458–461 (GVCT) each bind FAD. Residues Thr500, 568 to 569 (SR), and 574 to 578 (KVYVQ) each bind NADP(+). Position 654 (Trp654) interacts with FAD.

This sequence belongs to the NADPH-dependent diflavin oxidoreductase NDOR1 family. It in the N-terminal section; belongs to the flavodoxin family. In the C-terminal section; belongs to the flavoprotein pyridine nucleotide cytochrome reductase family. Interacts with dre2; as part of the cytosolic iron-sulfur (Fe-S) protein assembly (CIA) machinery. FAD serves as cofactor. FMN is required as a cofactor.

It is found in the cytoplasm. The protein localises to the mitochondrion. The catalysed reaction is 2 oxidized [2Fe-2S]-[protein] + NADPH = 2 reduced [2Fe-2S]-[protein] + NADP(+) + H(+). Functionally, NADPH-dependent reductase which is a central component of the cytosolic iron-sulfur (Fe-S) protein assembly (CIA) machinery. Transfers electrons from NADPH via its FAD and FMN prosthetic groups to the [2Fe-2S] cluster of dre2, another key component of the CIA machinery. In turn, this reduced cluster provides electrons for assembly of cytosolic iron-sulfur cluster proteins. Positively controls H(2)O(2)-induced cell death. This is NADPH-dependent diflavin oxidoreductase 1 from Emericella nidulans (strain FGSC A4 / ATCC 38163 / CBS 112.46 / NRRL 194 / M139) (Aspergillus nidulans).